A 199-amino-acid polypeptide reads, in one-letter code: Thioredoxin peroxidase (199 aa).

Residues 6-165 (AKLNHPAPHF…TLRLVKAFQF (160 aa)) enclose the Thioredoxin domain. The Cysteine sulfenic acid (-SOH) intermediate role is filled by Cys52. The segment at 179-199 (PGSKTMKADPNGSQDYFSSMN) is disordered. Residues 189–199 (NGSQDYFSSMN) show a composition bias toward polar residues.

Belongs to the peroxiredoxin family. AhpC/Prx1 subfamily. As to quaternary structure, homodimer; disulfide-linked, upon oxidation.

The catalysed reaction is a hydroperoxide + [thioredoxin]-dithiol = an alcohol + [thioredoxin]-disulfide + H2O. Its function is as follows. Thiol-specific peroxidase that catalyzes the reduction of hydrogen peroxide and organic hydroperoxides to water and alcohols, respectively. Plays a role in cell protection against oxidative stress by detoxifying peroxides and as sensor of hydrogen peroxide-mediated signaling events. In Trypanosoma brucei rhodesiense, this protein is Thioredoxin peroxidase.